Consider the following 296-residue polypeptide: 4-hydroxy-tetrahydrodipicolinate synthase (296 aa).

Residue Thr-47 coordinates pyruvate. The active-site Proton donor/acceptor is the Tyr-135. Residue Lys-163 is the Schiff-base intermediate with substrate of the active site. Position 205 (Ile-205) interacts with pyruvate.

This sequence belongs to the DapA family. Homotetramer; dimer of dimers.

It localises to the cytoplasm. The catalysed reaction is L-aspartate 4-semialdehyde + pyruvate = (2S,4S)-4-hydroxy-2,3,4,5-tetrahydrodipicolinate + H2O + H(+). Its pathway is amino-acid biosynthesis; L-lysine biosynthesis via DAP pathway; (S)-tetrahydrodipicolinate from L-aspartate: step 3/4. Catalyzes the condensation of (S)-aspartate-beta-semialdehyde [(S)-ASA] and pyruvate to 4-hydroxy-tetrahydrodipicolinate (HTPA). This is 4-hydroxy-tetrahydrodipicolinate synthase from Macrococcus caseolyticus (strain JCSC5402) (Macrococcoides caseolyticum).